We begin with the raw amino-acid sequence, 232 residues long: Mitochondrial import inner membrane translocase subunit Tim21 (232 aa).

The N-terminal 31 residues, 1–31 (MLPRFLWRPVLCSYRALGSPSRSLTVSYRNL), are a transit peptide targeting the mitochondrion. Residues 96 to 116 (FTYFIVVLIGIGVTGGLFYVV) traverse the membrane as a helical segment.

The protein belongs to the TIM21 family.

Its subcellular location is the mitochondrion membrane. Its function is as follows. May participate in the translocation of transit peptide-containing proteins across the mitochondrial inner membrane. The chain is Mitochondrial import inner membrane translocase subunit Tim21 (timm21) from Xenopus laevis (African clawed frog).